Reading from the N-terminus, the 66-residue chain is Stress-associated endoplasmic reticulum protein 1 (66 aa).

Residues 1–31 (MVAKQRIRMANEKHSKNITQRGNVAKTSRNA) are disordered. A compositionally biased stretch (polar residues) spans 17 to 30 (NITQRGNVAKTSRN). The helical transmembrane segment at 39–59 (GPWLLALFIFVVCGSAIFQII) threads the bilayer.

The protein belongs to the RAMP4 family. As to quaternary structure, interacts with SEC61B, SEC61A1 and the SEC61 complex. Interacts with CANX.

It localises to the membrane. The protein localises to the endoplasmic reticulum membrane. In terms of biological role, interacts with target proteins during their translocation into the lumen of the endoplasmic reticulum. Protects unfolded target proteins against degradation during ER stress. May facilitate glycosylation of target proteins after termination of ER stress. May modulate the use of N-glycosylation sites on target proteins. The chain is Stress-associated endoplasmic reticulum protein 1 (SERP1) from Bos taurus (Bovine).